A 100-amino-acid chain; its full sequence is Protein E7 (100 aa).

The segment at 1-42 is E7 terminal domain; the sequence is MRGAAPTVADLNLELNDLVLPANLLSEEVLQSSDDEYEITEE. Residues 54 to 91 fold into a zinc finger; the sequence is CYRCEVAVRITLYAAELGLRTLEQLLVEGKLTFCCTAC. The short motif at 72–80 is the Nuclear export signal element; the sequence is LRTLEQLLV.

Belongs to the papillomaviridae E7 protein family. Homodimer. Homooligomer. Interacts with host RB1; this interaction induces dissociation of RB1-E2F1 complex thereby disrupting RB1 activity. Interacts with host EP300; this interaction represses EP300 transcriptional activity. Interacts with protein E2; this interaction inhibits E7 oncogenic activity. Interacts with host TMEM173/STING; this interaction impairs the ability of TMEM173/STING to sense cytosolic DNA and promote the production of type I interferon (IFN-alpha and IFN-beta). In terms of processing, highly phosphorylated.

Its subcellular location is the host cytoplasm. It is found in the host nucleus. Plays a role in viral genome replication by driving entry of quiescent cells into the cell cycle. Stimulation of progression from G1 to S phase allows the virus to efficiently use the cellular DNA replicating machinery to achieve viral genome replication. E7 protein has both transforming and trans-activating activities. Induces the disassembly of the E2F1 transcription factor from RB1, with subsequent transcriptional activation of E2F1-regulated S-phase genes. Interferes with host histone deacetylation mediated by HDAC1 and HDAC2, leading to transcription activation. Also plays a role in the inhibition of both antiviral and antiproliferative functions of host interferon alpha. Interaction with host TMEM173/STING impairs the ability of TMEM173/STING to sense cytosolic DNA and promote the production of type I interferon (IFN-alpha and IFN-beta). The sequence is that of Protein E7 from Human papillomavirus 4.